The chain runs to 712 residues: Polyribonucleotide nucleotidyltransferase (712 aa).

Asp-488 and Asp-494 together coordinate Mg(2+). Residues Pro-555–Ile-614 form the KH domain. An S1 motif domain is found at Gly-624–Lys-692.

The protein belongs to the polyribonucleotide nucleotidyltransferase family. Requires Mg(2+) as cofactor.

It is found in the cytoplasm. The catalysed reaction is RNA(n+1) + phosphate = RNA(n) + a ribonucleoside 5'-diphosphate. Functionally, involved in mRNA degradation. Catalyzes the phosphorolysis of single-stranded polyribonucleotides processively in the 3'- to 5'-direction. This is Polyribonucleotide nucleotidyltransferase from Caulobacter vibrioides (strain NA1000 / CB15N) (Caulobacter crescentus).